Reading from the N-terminus, the 333-residue chain is MINVGIIGAGGWGLALANIFSEKHNVKVWVHSESSYKLLSTSYRNDNYLENIQLNKSIKFTTDVGEAVNDSEIVIIVTPSFAFADACINIEPYISNDQILVSATKGLDRKTGKTMSEVARSIISGDLSILTLSGPSHAEEAAKGVPTAVVVGGEKGVSEYVRDTLTVPPKFRIYNSTDQKGVEIGGALKNIIAIAGGIVDGLKLGDNTKAALITRGLHEIVRFALSKGARIDTMYGLSGIGDLIVTCSSGLSRNNRLGRELAKGKKYQDVIAENHGQVAEGVYATTAAYEYAQKNNIYMPITEAIYNILFNDANIQDTLTELMSKDAKSEGFF.

W12, H31, and K105 together coordinate NADPH. K105, G134, and S136 together coordinate sn-glycerol 3-phosphate. A138 provides a ligand contact to NADPH. 5 residues coordinate sn-glycerol 3-phosphate: K189, D242, S252, R253, and N254. K189 serves as the catalytic Proton acceptor. Position 253 (R253) interacts with NADPH. NADPH is bound by residues V278 and E280.

It belongs to the NAD-dependent glycerol-3-phosphate dehydrogenase family.

Its subcellular location is the cytoplasm. It carries out the reaction sn-glycerol 3-phosphate + NAD(+) = dihydroxyacetone phosphate + NADH + H(+). It catalyses the reaction sn-glycerol 3-phosphate + NADP(+) = dihydroxyacetone phosphate + NADPH + H(+). It functions in the pathway membrane lipid metabolism; glycerophospholipid metabolism. Catalyzes the reduction of the glycolytic intermediate dihydroxyacetone phosphate (DHAP) to sn-glycerol 3-phosphate (G3P), the key precursor for phospholipid synthesis. This Brachyspira hyodysenteriae (strain ATCC 49526 / WA1) protein is Glycerol-3-phosphate dehydrogenase [NAD(P)+].